We begin with the raw amino-acid sequence, 366 residues long: L-tyrosine C(3)-methyltransferase (366 aa).

Residues 1-12 (MTISLENTTVGQ) show a composition bias toward polar residues. A disordered region spans residues 1–22 (MTISLENTTVGQNPAGGPPTGK). Position 223 (glutamate 223) interacts with S-adenosyl-L-methionine.

The protein belongs to the class I-like SAM-binding methyltransferase superfamily. Cation-independent O-methyltransferase family.

It carries out the reaction L-tyrosine + S-adenosyl-L-methionine = 3-methyl-L-tyrosine + S-adenosyl-L-homocysteine + H(+). It participates in antibiotic biosynthesis. Functionally, C-methyltransferase that mediates the methylation of tyrosine into 3-methyl-L-tyrosine (3-Me-Tyr) in biosynthesis of saframycin A, a potent antitumor antibiotic that belongs to the tetrahydroisoquinoline family. Involved in biosynthesis of 3-hydroxy-5-methyl-O-methyltyrosine (3-OH-5-Me-OMe-Tyr), a core structure of saframycin A. This Streptomyces lavendulae protein is L-tyrosine C(3)-methyltransferase.